The following is a 408-amino-acid chain: Aminoacylase-1A (408 aa).

Position 80 (His-80) interacts with Zn(2+). Asp-82 is an active-site residue. Asp-113 contributes to the Zn(2+) binding site. Glu-147 functions as the Proton acceptor in the catalytic mechanism. Residues Glu-148, Glu-175, and His-373 each contribute to the Zn(2+) site. At Ser-408 the chain carries Phosphoserine.

This sequence belongs to the peptidase M20A family. Homodimer. Zn(2+) is required as a cofactor. The N-terminus is blocked.

It localises to the cytoplasm. It catalyses the reaction an N-acyl-L-amino acid + H2O = an L-alpha-amino acid + a carboxylate. It carries out the reaction an N-acetyl-L-cysteine-S-conjugate + H2O = an S-substituted L-cysteine + acetate. Involved in the hydrolysis of N-acylated or N-acetylated amino acids (except L-aspartate). This is Aminoacylase-1A (Acy1a) from Rattus norvegicus (Rat).